The sequence spans 293 residues: 5'-3' exoribonuclease Rnm (293 aa).

Positions 13, 15, 20, 45, 72, 83, 198, 255, and 257 each coordinate Mn(2+).

The protein belongs to the PHP family. TrpH/YciV subfamily. Mn(2+) serves as cofactor.

The catalysed reaction is a ribonucleoside 3',5'-bisphosphate + H2O = a ribonucleoside 5'-phosphate + phosphate. Its function is as follows. Exoribonuclease that catalyzes the last steps of 5S, 16S and 23S rRNA 5'-end maturation. Removes 3 nucleotides (nt) from the 5' end of 5S, 16S and 23S rRNA precursors to generate the mature 5' ends. Precursors with longer extensions are not processed (7 nt at the 5' end of pre-23S rRNA or 66 nt at the 5'-end of 16S rRNA are not processed). 5S and 23S rRNA maturation occurs more efficiently and accurately on ribosomal particles as compared to free RNA; the enzyme overdigests free RNA but generates the correct 5'-end in ribosomes from rnm deletion strains. Efficiently catalyzes the hydrolysis of the 3'-phosphate from 3',5'-bis-phosphonucleotides as well as the successive hydrolysis of 5'-phosphomononucleotides from the 5'-end of short pieces of RNA and DNA, with no specificity toward the identity of the nucleotide base. Is more efficient at hydrolyzing RNA oligonucleotides than DNA oligonucleotides. This enzyme can also hydrolyze annealed DNA duplexes, albeit at a catalytic efficiency approximately 10-fold lower than that of the corresponding single-stranded oligonucleotides. This Escherichia coli (strain K12) protein is 5'-3' exoribonuclease Rnm.